Here is a 198-residue protein sequence, read N- to C-terminus: Pre-histone-like nucleoprotein (198 aa).

The residue at position 2 (serine 2) is an N-acetylserine; by host. Residues 2-24 (SILISPSNNTGWGLRFPSKMFGG) constitute a propeptide that is removed on maturation. The tract at residues 24-55 (GAKKRSDQHPVRVRGHYRAPWGAHKRGRTGRT) is disordered. N6-acetyllysine; by host is present on residues lysine 27 and lysine 48. The segment covering 34-52 (VRVRGHYRAPWGAHKRGRT) has biased composition (basic residues). Threonine 55 and threonine 74 each carry phosphothreonine; by host. 2 positions are modified to phosphoserine; by host: serine 183 and serine 185. The short motif at 188–198 (RVPVRTRPPRN) is the Nuclear localization signal element.

This sequence belongs to the adenoviridae histone-like nucleoprotein family. In terms of assembly, interacts with the core-capsid bridging protein; this interaction bridges the virus core to the capsid. Interacts with host NPM1; this interaction might play a role in placing the pre-histone-like nucleoprotein on the viral DNA or regulating viral gene expression. Interacts with host HMGB1; this interaction inhibits host immune response. Cleaved near the N-terminus by the viral protease during virion maturation to form the mature protein.

The protein resides in the virion. It is found in the host nucleus. The protein localises to the host nucleolus. Its function is as follows. Plays a role in the inhibition of host immune response within the nucleus. Interacts with cellular nucleosomes and immobilizes the host immune danger signal HMGB1 on chromatin. In turn, prevents HMGB1 release out of the cell and thus decreases inflammation. Also plays a role in the wrapping and condensation of the viral DNA. May also promote viral genome import into the nucleus. The sequence is that of Pre-histone-like nucleoprotein from Human adenovirus C serotype 2 (HAdV-2).